Consider the following 168-residue polypeptide: uncharacterized protein (168 aa).

Over residues 1–10 (MSPTTGPQPN) the composition is skewed to pro residues. 2 disordered regions span residues 1-23 (MSPTTGPQPNPRAWECHHTTGPQ) and 117-143 (EPGNVTVKRGPQPNPRAWECHRTRGPQ).

This is an uncharacterized protein from Homo sapiens (Human).